The primary structure comprises 87 residues: Co-chaperonin GroES (87 aa).

It belongs to the GroES chaperonin family. As to quaternary structure, heptamer of 7 subunits arranged in a ring. Interacts with the chaperonin GroEL.

It is found in the cytoplasm. Its function is as follows. Together with the chaperonin GroEL, plays an essential role in assisting protein folding. The GroEL-GroES system forms a nano-cage that allows encapsulation of the non-native substrate proteins and provides a physical environment optimized to promote and accelerate protein folding. GroES binds to the apical surface of the GroEL ring, thereby capping the opening of the GroEL channel. In Campylobacter hominis (strain ATCC BAA-381 / DSM 21671 / CCUG 45161 / LMG 19568 / NCTC 13146 / CH001A), this protein is Co-chaperonin GroES.